The primary structure comprises 502 residues: GTPase Obg (502 aa).

One can recognise an Obg domain in the interval 2-159; sequence NRFIDRVVLH…HDLILELKSM (158 aa). Residues 160–341 form the OBG-type G domain; sequence ADVGLVGFPS…LKYKLLEIVQ (182 aa). GTP is bound by residues 166-173, 191-195, 212-215, 292-295, and 322-324; these read GFPSAGKS, FTTLQ, DVPG, NKAD, and SAV. Positions 173 and 193 each coordinate Mg(2+). In terms of domain architecture, OCT spans 364–444; the sequence is DGRRRREEFE…IGGVTFEWEP (81 aa).

It belongs to the TRAFAC class OBG-HflX-like GTPase superfamily. OBG GTPase family. Monomer. Mg(2+) serves as cofactor.

The protein localises to the cytoplasm. An essential GTPase which binds GTP, GDP and possibly (p)ppGpp with moderate affinity, with high nucleotide exchange rates and a fairly low GTP hydrolysis rate. Plays a role in control of the cell cycle, stress response, ribosome biogenesis and in those bacteria that undergo differentiation, in morphogenesis control. The chain is GTPase Obg from Corynebacterium efficiens (strain DSM 44549 / YS-314 / AJ 12310 / JCM 11189 / NBRC 100395).